A 150-amino-acid polypeptide reads, in one-letter code: Deoxyuridine 5'-triphosphate nucleotidohydrolase (150 aa).

Residues 69 to 71 (RSG), Asn-82, 86 to 88 (LID), and Lys-96 each bind substrate.

Belongs to the dUTPase family. Requires Mg(2+) as cofactor.

It carries out the reaction dUTP + H2O = dUMP + diphosphate + H(+). It participates in pyrimidine metabolism; dUMP biosynthesis; dUMP from dCTP (dUTP route): step 2/2. This enzyme is involved in nucleotide metabolism: it produces dUMP, the immediate precursor of thymidine nucleotides and it decreases the intracellular concentration of dUTP so that uracil cannot be incorporated into DNA. The protein is Deoxyuridine 5'-triphosphate nucleotidohydrolase of Neisseria meningitidis serogroup B (strain ATCC BAA-335 / MC58).